The sequence spans 270 residues: Triosephosphate isomerase (270 aa).

A substrate-binding site is contributed by 27–29 (NWK). Residue histidine 114 is the Electrophile of the active site. Glutamate 184 functions as the Proton acceptor in the catalytic mechanism. Residues glycine 190, serine 230, and 251–252 (GG) each bind substrate.

The protein belongs to the triosephosphate isomerase family. As to quaternary structure, homodimer.

The protein resides in the cytoplasm. It carries out the reaction D-glyceraldehyde 3-phosphate = dihydroxyacetone phosphate. It functions in the pathway carbohydrate biosynthesis; gluconeogenesis. The protein operates within carbohydrate degradation; glycolysis; D-glyceraldehyde 3-phosphate from glycerone phosphate: step 1/1. In terms of biological role, involved in the gluconeogenesis. Catalyzes stereospecifically the conversion of dihydroxyacetone phosphate (DHAP) to D-glyceraldehyde-3-phosphate (G3P). The sequence is that of Triosephosphate isomerase from Chlamydia muridarum (strain MoPn / Nigg).